Consider the following 335-residue polypeptide: Cathepsin B (335 aa).

The signal sequence occupies residues 1–17 (MWRLLATLSCLLVLTSA). A propeptide spans 18–79 (RSSLYFPPLS…QRDAFAADVV (62 aa)) (activation peptide). Disulfide bonds link Cys-93–Cys-122, Cys-105–Cys-150, Cys-141–Cys-207, Cys-142–Cys-146, Cys-179–Cys-211, and Cys-187–Cys-198. Residue Cys-108 is part of the active site. The N-linked (GlcNAc...) asparagine glycan is linked to Asn-192. N6-acetyllysine is present on Lys-220. A disulfide bond links Cys-227 and Cys-331. Active-site residues include His-278 and Asn-298. The propeptide occupies 333 to 335 (HQY).

It belongs to the peptidase C1 family. In terms of assembly, dimer of a heavy chain and a light chain cross-linked by a disulfide bond. Interacts with SRPX2. Directly interacts with SHKBP1. As to expression, expressed in myoblasts, the myotube, fibroblasts and fetal muscle (at protein level). Expressed in the spleen (at protein level).

Its subcellular location is the lysosome. The protein localises to the melanosome. It localises to the secreted. It is found in the extracellular space. The protein resides in the apical cell membrane. It catalyses the reaction Hydrolysis of proteins with broad specificity for peptide bonds. Preferentially cleaves -Arg-Arg-|-Xaa bonds in small molecule substrates (thus differing from cathepsin L). In addition to being an endopeptidase, shows peptidyl-dipeptidase activity, liberating C-terminal dipeptides.. Its function is as follows. Thiol protease which is believed to participate in intracellular degradation and turnover of proteins. Cleaves matrix extracellular phosphoglycoprotein MEPE. Involved in the solubilization of cross-linked TG/thyroglobulin in the thyroid follicle lumen. Has also been implicated in tumor invasion and metastasis. This Bos taurus (Bovine) protein is Cathepsin B (CTSB).